A 333-amino-acid polypeptide reads, in one-letter code: Adenosine deaminase (333 aa).

H12 and H14 together coordinate Zn(2+). Residues H14, D16, and G170 each contribute to the substrate site. A Zn(2+)-binding site is contributed by H197. The Proton donor role is filled by E200. Residue D278 coordinates Zn(2+). D279 contributes to the substrate binding site.

The protein belongs to the metallo-dependent hydrolases superfamily. Adenosine and AMP deaminases family. Adenosine deaminase subfamily. Zn(2+) is required as a cofactor.

It catalyses the reaction adenosine + H2O + H(+) = inosine + NH4(+). The catalysed reaction is 2'-deoxyadenosine + H2O + H(+) = 2'-deoxyinosine + NH4(+). Its function is as follows. Catalyzes the hydrolytic deamination of adenosine and 2-deoxyadenosine. In Salmonella paratyphi C (strain RKS4594), this protein is Adenosine deaminase.